Reading from the N-terminus, the 309-residue chain is NAD kinase (309 aa).

The Proton acceptor role is filled by Asp89. NAD(+) is bound by residues 89–90, 163–164, His174, Arg191, Asp193, and 204–209; these read DG, NE, and TAYALS.

This sequence belongs to the NAD kinase family. Requires a divalent metal cation as cofactor.

It localises to the cytoplasm. It carries out the reaction NAD(+) + ATP = ADP + NADP(+) + H(+). In terms of biological role, involved in the regulation of the intracellular balance of NAD and NADP, and is a key enzyme in the biosynthesis of NADP. Catalyzes specifically the phosphorylation on 2'-hydroxyl of the adenosine moiety of NAD to yield NADP. In Shewanella sp. (strain W3-18-1), this protein is NAD kinase.